Here is a 95-residue protein sequence, read N- to C-terminus: Small ribosomal subunit protein bS6 (95 aa).

This sequence belongs to the bacterial ribosomal protein bS6 family.

Its function is as follows. Binds together with bS18 to 16S ribosomal RNA. The sequence is that of Small ribosomal subunit protein bS6 from Acholeplasma laidlawii (strain PG-8A).